We begin with the raw amino-acid sequence, 1282 residues long: Cytokine receptor (1282 aa).

The signal sequence occupies residues 1 to 23 (MVAQEQLVLLLMLLAGCRGGANA). At 24–889 (ILDPGWVIPS…CTPDTHSVKA (866 aa)) the chain is on the extracellular side. 4 N-linked (GlcNAc...) asparagine glycosylation sites follow: asparagine 44, asparagine 86, asparagine 87, and asparagine 114. A disulfide bridge connects residues cysteine 47 and cysteine 106. 7 consecutive Fibronectin type-III domains span residues 124–220 (PLLV…NHFE), 227–327 (PGQN…TAPA), 329–431 (PRRP…SNRD), 436–535 (EPRN…KKDD), 537–631 (AKME…TGEA), 635–735 (QPRE…TAIG), and 736–836 (VPSP…LMST). Cysteine 132 and cysteine 142 form a disulfide bridge. 2 N-linked (GlcNAc...) asparagine glycosylation sites follow: asparagine 143 and asparagine 156. Cysteine 173 and cysteine 183 are disulfide-bonded. 9 N-linked (GlcNAc...) asparagine glycosylation sites follow: asparagine 184, asparagine 230, asparagine 235, asparagine 278, asparagine 298, asparagine 310, asparagine 376, asparagine 448, and asparagine 466. Cysteine 472 and cysteine 482 are joined by a disulfide. Residues asparagine 568, asparagine 581, asparagine 626, asparagine 676, asparagine 703, asparagine 777, asparagine 790, and asparagine 862 are each glycosylated (N-linked (GlcNAc...) asparagine). The helical transmembrane segment at 890 to 910 (MYQTIEVTVAILVLGVIFYLV) threads the bilayer. Residues 911 to 1282 (YKKYRKMSDI…NAMAHNRHVL (372 aa)) are Cytoplasmic-facing. The residue at position 976 (serine 976) is a Phosphoserine. 2 disordered regions span residues 989–1092 (TASS…HTFS) and 1238–1258 (TVGSPTHAAGGAPGGGNQHSR). Composition is skewed to basic and acidic residues over residues 999-1009 (VDRDGYDDNHE) and 1033-1064 (NDRERERERDREQEREREQQQQQRESEMDREQ).

This sequence belongs to the type I cytokine receptor family. Interacts with wdp; the interaction promotes internalization of dome and its subsequent lysosomal degradation; thereby reducing JAK/STAT signaling. Undergoes lysosomal degradation. In stage 11 embryos, tracheal pits show highest expression, at stage 14 high expression is detected in the posterior spiracles, gut and head.

Its subcellular location is the apicolateral cell membrane. Functionally, critical for epithelial morphogenesis during oogenesis; border cell migration. Required in the germarium for the polarization of follicle cells during encapsulation of germline cells. Required for embryonic segmentation and trachea specification. Essential receptor molecule for upd and JAK/STAT signaling during oogenesis. The sequence is that of Cytokine receptor (dome) from Drosophila melanogaster (Fruit fly).